A 232-amino-acid chain; its full sequence is tRNA (guanine-N(1)-)-methyltransferase (232 aa).

S-adenosyl-L-methionine-binding positions include G114 and I134–L139.

It belongs to the RNA methyltransferase TrmD family. Homodimer.

The protein resides in the cytoplasm. It carries out the reaction guanosine(37) in tRNA + S-adenosyl-L-methionine = N(1)-methylguanosine(37) in tRNA + S-adenosyl-L-homocysteine + H(+). Specifically methylates guanosine-37 in various tRNAs. This is tRNA (guanine-N(1)-)-methyltransferase from Wolbachia pipientis subsp. Culex pipiens (strain wPip).